Reading from the N-terminus, the 234-residue chain is Leucyl/phenylalanyl-tRNA--protein transferase (234 aa).

It belongs to the L/F-transferase family.

Its subcellular location is the cytoplasm. The enzyme catalyses N-terminal L-lysyl-[protein] + L-leucyl-tRNA(Leu) = N-terminal L-leucyl-L-lysyl-[protein] + tRNA(Leu) + H(+). It carries out the reaction N-terminal L-arginyl-[protein] + L-leucyl-tRNA(Leu) = N-terminal L-leucyl-L-arginyl-[protein] + tRNA(Leu) + H(+). It catalyses the reaction L-phenylalanyl-tRNA(Phe) + an N-terminal L-alpha-aminoacyl-[protein] = an N-terminal L-phenylalanyl-L-alpha-aminoacyl-[protein] + tRNA(Phe). Its function is as follows. Functions in the N-end rule pathway of protein degradation where it conjugates Leu, Phe and, less efficiently, Met from aminoacyl-tRNAs to the N-termini of proteins containing an N-terminal arginine or lysine. The sequence is that of Leucyl/phenylalanyl-tRNA--protein transferase from Myxococcus xanthus (strain DK1622).